We begin with the raw amino-acid sequence, 528 residues long: Neuronal acetylcholine receptor subunit alpha-2 (528 aa).

Residues Met1–Thr23 form the signal peptide. Topologically, residues Arg24–Leu239 are extracellular. N-linked (GlcNAc...) asparagine glycosylation is found at Asn54 and Asn104. 2 cysteine pairs are disulfide-bonded: Cys158/Cys172 and Cys222/Cys223. 3 helical membrane-spanning segments follow: residues Pro240 to Leu264, Ile272 to Thr290, and Tyr306 to Val327. Residues His328–Arg501 lie on the Cytoplasmic side of the membrane. The segment covering Asp390–Glu410 has biased composition (acidic residues). A disordered region spans residues Asp390–Cys427. A helical membrane pass occupies residues Ile502–Leu520.

Belongs to the ligand-gated ion channel (TC 1.A.9) family. Acetylcholine receptor (TC 1.A.9.1) subfamily. Alpha-2/CHRNA2 sub-subfamily. In terms of assembly, neuronal AChR is composed of two different types of subunits: alpha and non-alpha (beta). CHRNA2/alpha-2 subunit can be combined to CHRNB2/beta-2 or CHRNB4/beta-4 to give rise to functional receptors. Both CHRNA2:CHRNB2 and CHRNA2:CHRNB4 nAChR complexes are heteropentamers with two subtypes: LS (low agonist sensitivity) with a (CHRNA2)3:(CHRNB2/4)2 and HS (high agonist sensitivity) with a (CHRNA2)2:(CHRNB2/4)3 stoichiometries; the subtypes differ in their subunit binding interfaces which are involved in ligand binding.

Its subcellular location is the synaptic cell membrane. It localises to the cell membrane. It carries out the reaction Ca(2+)(in) = Ca(2+)(out). The enzyme catalyses K(+)(in) = K(+)(out). It catalyses the reaction Na(+)(in) = Na(+)(out). In terms of biological role, component of neuronal acetylcholine receptors (nAChRs) that function as pentameric, ligand-gated cation channels with high calcium permeability among other activities. nAChRs are excitatory neurotrasnmitter receptors formed by a collection of nAChR subunits known to mediate synaptic transmission in the nervous system and the neuromuscular junction. Each nAchR subunit confers differential attributes to channel properties, including activation, deactivation and desensitization kinetics, pH sensitivity, cation permeability, and binding to allosteric modulators. CHRNA2 forms heteropentameric neuronal acetylcholine receptors with CHRNB2 and CHRNB4 and plays a role in nicotine dependence. This is Neuronal acetylcholine receptor subunit alpha-2 (CHRNA2) from Gallus gallus (Chicken).